A 304-amino-acid chain; its full sequence is MTTKFNVKTFQGMILALQDYWANVGCTIVQPFDMEVGAGTSHPMTALRALGPEPMAFAYVQPSRRPTDGRYGENPNRLQHYYQFQVVIKPSPDNIQELYLGSLKMLGFDPTQHDIRFVEDNWENPTLGAWGLGWEVWLNGMEVTQFTYFQQVGGLECKPVTGEVTYGLERLAMYIQGVDSVYDLVWSDGPLGKTTYGDVFHQNEVEQSTYNFEYADVDFLFKAFEQYEKEATELLALEKPLPLPAYERILKAAHSFNMLDARKAISVTERQRYILRIRTLTKGVAEAYYASREALGFPGCNKQV.

The protein belongs to the class-II aminoacyl-tRNA synthetase family. As to quaternary structure, tetramer of two alpha and two beta subunits.

The protein resides in the cytoplasm. It carries out the reaction tRNA(Gly) + glycine + ATP = glycyl-tRNA(Gly) + AMP + diphosphate. This is Glycine--tRNA ligase alpha subunit from Actinobacillus pleuropneumoniae serotype 3 (strain JL03).